The primary structure comprises 305 residues: Nuclear egress protein 1 (305 aa).

Residues 1 to 42 (MYDIAPRRSGSRPGPGRDKTRRRSRFSAAGNPGVERRASRKS) form a disordered region. The segment at 105 to 224 (CLTLSGMGYY…YVIFPGTSAH (120 aa)) adopts a CCCH-type zinc-finger fold.

This sequence belongs to the herpesviridae NEC1 protein family. In terms of assembly, forms a heterohexameric complex with NEC2. Interacts with capsid vertex specific component 2/CVC2; this interaction directs the capsid to the host inner nuclear membrane to initiate budding. Phosphorylated at serine residues in the N-terminus. This phosphorylation regulates the localization within the inner nuclear membrane.

It localises to the host nucleus inner membrane. In terms of biological role, plays an essential role in virion nuclear egress, the first step of virion release from infected cell. Within the host nucleus, NEC1 interacts with the newly formed capsid through the vertexes and directs it to the inner nuclear membrane by associating with NEC2. Induces the budding of the capsid at the inner nuclear membrane as well as its envelopment into the perinuclear space. There, the NEC1/NEC2 complex promotes the fusion of the enveloped capsid with the outer nuclear membrane and the subsequent release of the viral capsid into the cytoplasm where it will reach the secondary budding sites in the host Golgi or trans-Golgi network. The protein is Nuclear egress protein 1 of Human herpesvirus 2 (strain HG52) (HHV-2).